The chain runs to 186 residues: MGLFDKLAGWLGLKKKEVNVLCLGLDNSGKTTIINQLKPSNAQAQDIVPTIGFSIEKFKTSSLSFTVFDMSGQGRYRNLWEHYYKEGQAIIFVIDSGDKLRMVVAKEELDTLLNHPDIKHRRIPLLFFANKMDLRDALSAVKVSQLLCLENIKDKPWHICASDAVKGEGLLEGVDWLQDQIRAMKT.

Gly2 carries N-myristoyl glycine lipidation. GTP is bound by residues 24–31, Thr50, 69–73, Gly72, 130–133, and Ala164; these read GLDNSGKT, DMSGQ, and NKMD. Thr50 is a binding site for Mg(2+).

It belongs to the small GTPase superfamily. Arf family. Expressed in brain, heart and eye. Isoform 2 is expressed only in the retina.

The protein resides in the cell projection. It is found in the cilium membrane. It localises to the cytoplasm. Its subcellular location is the cytoskeleton. The protein localises to the cilium axoneme. The protein resides in the cilium basal body. Probably involved in membrane protein trafficking at the base of the ciliary organelle. May function in cilia biogenesis. Isoform 2 is required for proper retinal function and organization. In Danio rerio (Zebrafish), this protein is ADP-ribosylation factor-like protein 6 (arl6).